Here is a 293-residue protein sequence, read N- to C-terminus: Decaprenyl diphosphate synthase (293 aa).

The tract at residues 1–24 is disordered; that stretch reads MATTRGKKTYPQLPPAPDDYPTFP. Residue D73 is part of the active site. Mg(2+) is bound at residue D73. Substrate is bound by residues 74-77, W78, R86, H90, and 118-120; these read GNGR and STE. Catalysis depends on N121, which acts as the Proton acceptor. Substrate contacts are provided by residues W122, R124, R241, and 247–249; that span reads RAS. E260 is a binding site for Mg(2+).

Belongs to the UPP synthase family. Homodimer. Mg(2+) is required as a cofactor.

The protein resides in the cell membrane. It carries out the reaction (2Z,6E)-farnesyl diphosphate + 7 isopentenyl diphosphate = (2Z,6Z,10Z,14Z,18Z,22Z,26Z,30Z,34E)-decaprenyl diphosphate + 7 diphosphate. It catalyses the reaction n isopentenyl diphosphate + (2E,6E)-farnesyl diphosphate = a di-trans,poly-cis-polyprenyl diphosphate + n diphosphate. In terms of biological role, catalyzes the sequential condensation of isopentenyl diphosphate (IPP) in the cis configuration with (2Z,6E)-farnesyl diphosphate (Z-FPP or EZ-FPP) generating the 50 carbon product trans,polycis-decaprenyl diphosphate. When (2E,6E)-farnesyl diphosphate (E-FPP or EE-FPP) is used in vitro, both primary products decaprenyl diphosphate and heptaprenyl diphosphate are synthesized. It is probably due to the fact that M.smegmatis synthesizes both (2E,6E,10E)-geranylgeranyl diphosphate (EEE-GGPP) and (2E,6E,10Z)-geranylgeranyl diphosphate (EEZ-GGPP). Can also accept many different allylic substrates, including E-geranyl diphosphate (E-GPP), neryl diphosphate (NPP), and all-trans-geranyl-geranyl diphosphate. The protein is Decaprenyl diphosphate synthase (uppS) of Mycolicibacterium smegmatis (strain ATCC 700084 / mc(2)155) (Mycobacterium smegmatis).